The primary structure comprises 684 residues: Threonine--tRNA ligase (684 aa).

Residues 1–66 (MTAVASSAPA…DTDVEVTPVA (66 aa)) form the TGS domain. Positions 261-567 (DHRKLGVELD…LTEHYAGAFP (307 aa)) are catalytic. Cysteine 366, histidine 417, and histidine 544 together coordinate Zn(2+).

It belongs to the class-II aminoacyl-tRNA synthetase family. In terms of assembly, homodimer. Requires Zn(2+) as cofactor.

It localises to the cytoplasm. The catalysed reaction is tRNA(Thr) + L-threonine + ATP = L-threonyl-tRNA(Thr) + AMP + diphosphate + H(+). Functionally, catalyzes the attachment of threonine to tRNA(Thr) in a two-step reaction: L-threonine is first activated by ATP to form Thr-AMP and then transferred to the acceptor end of tRNA(Thr). Also edits incorrectly charged L-seryl-tRNA(Thr). This Mycolicibacterium smegmatis (strain ATCC 700084 / mc(2)155) (Mycobacterium smegmatis) protein is Threonine--tRNA ligase.